The following is a 186-amino-acid chain: ADP-ribosylation factor-like protein 8A (186 aa).

Residues 1–19 (MIALFNKLLDWFKALFWKE) constitute an intramembrane region (note=Mediates targeting to membranes). GTP is bound by residues 29 to 35 (QYSGKTT), 71 to 75 (DIGGQ), and 130 to 133 (NKRD).

Belongs to the small GTPase superfamily. Arf family. As to quaternary structure, interacts with PLEKHM1. When GTP-bound, interacts with RUFY3 and RUFY4, but not with RUFY1, nor RUFY2. Ubiquitously expressed.

Its subcellular location is the late endosome membrane. It is found in the lysosome membrane. It localises to the cytoplasm. The protein localises to the cytoskeleton. The protein resides in the spindle. Its subcellular location is the cell projection. It is found in the axon. It localises to the synapse. Functionally, plays a role in lysosome motility. In neurons, mediates the anterograde axonal long-range transport of presynaptic lysosome-related vesicles required for presynaptic biogenesis and synaptic function. May play a role in chromosome segregation. The polypeptide is ADP-ribosylation factor-like protein 8A (ARL8A) (Homo sapiens (Human)).